The primary structure comprises 197 residues: ATP-dependent Clp protease proteolytic subunit 1 (197 aa).

Catalysis depends on Ser99, which acts as the Nucleophile. Residue His124 is part of the active site.

Belongs to the peptidase S14 family. In terms of assembly, fourteen ClpP subunits assemble into 2 heptameric rings which stack back to back to give a disk-like structure with a central cavity, resembling the structure of eukaryotic proteasomes.

It is found in the cytoplasm. It carries out the reaction Hydrolysis of proteins to small peptides in the presence of ATP and magnesium. alpha-casein is the usual test substrate. In the absence of ATP, only oligopeptides shorter than five residues are hydrolyzed (such as succinyl-Leu-Tyr-|-NHMec, and Leu-Tyr-Leu-|-Tyr-Trp, in which cleavage of the -Tyr-|-Leu- and -Tyr-|-Trp bonds also occurs).. Its function is as follows. Cleaves peptides in various proteins in a process that requires ATP hydrolysis. Has a chymotrypsin-like activity. Plays a major role in the degradation of misfolded proteins. The chain is ATP-dependent Clp protease proteolytic subunit 1 from Treponema denticola (strain ATCC 35405 / DSM 14222 / CIP 103919 / JCM 8153 / KCTC 15104).